The sequence spans 266 residues: Short-chain dehydrogenase/reductase AacuF (266 aa).

Leucine 13, aspartate 57, and asparagine 85 together coordinate NADP(+). Residues serine 145 and tyrosine 164 each act as proton donor in the active site. Residues tyrosine 164, lysine 168, and valine 198 each contribute to the NADP(+) site. Catalysis depends on lysine 168, which acts as the Lowers pKa of active site Tyr.

The protein belongs to the short-chain dehydrogenases/reductases (SDR) family.

It participates in secondary metabolite biosynthesis. Short-chain dehydrogenase/reductase; part of the gene cluster that mediates the biosynthesis of the tetrahydroxanthone dimer secalonic acid D. The pathway begins with the synthesis of atrochrysone thioester by the polyketide synthase AacuL. The atrochrysone carboxyl ACP thioesterase AacuM then breaks the thioester bond and releases the atrochrysone carboxylic acid from AacuL. Atrochrysone carboxylic acid is decarboxylated by the decarboxylase AacuI, and oxidized by the anthrone oxygenase AacuG to yield emodin. Emodin is then reduced to emodin hydroquinone by a yet unidentified oxidoreductase. A-ring reduction by the short chain dehydrogenase AacuN, dehydration by the scytalone dehydratase-like protein AacuK and probable spontaneous re-oxidation, results in overall deoxygenation to chrysophanol. Baeyer-Villiger oxidation by the Baeyer-Villiger monooxygenase (BVMO) AacuH then yields monodictyphenone. Monodictyphenone is transformed into compounds with the tetrahydroxanthone skeleton via methylesterification by the methyltransferase AacuQ, followed by the action of the flavin-dependent monooxygenase AacuC, the isomerase AacuP, and the short chain dehydrogenase/reductase AacuF or AacuD. AacuF and AacuD should accept the same compound as a substrate but perform the ketoreduction with a different stereoselectivity, thus yielding blennolides B and A, respectively. In the final step of the biosynthesis, the cytochrome P450 monooxygenase AacuE accepts blennolide B and/or blennolide A to conduct the dimerization reaction to furnish the tetrahydroxanthone dimers, secalonic acids D, B, and F. This is Short-chain dehydrogenase/reductase AacuF from Aspergillus aculeatus (strain ATCC 16872 / CBS 172.66 / WB 5094).